The sequence spans 323 residues: Beta-ketoacyl-[acyl-carrier-protein] synthase III (323 aa).

Residues C114 and H250 contribute to the active site. The ACP-binding stretch occupies residues 251–255 (QANRR). The active site involves N280.

The protein belongs to the thiolase-like superfamily. FabH family. Homodimer.

Its subcellular location is the cytoplasm. The catalysed reaction is malonyl-[ACP] + acetyl-CoA + H(+) = 3-oxobutanoyl-[ACP] + CO2 + CoA. It functions in the pathway lipid metabolism; fatty acid biosynthesis. Functionally, catalyzes the condensation reaction of fatty acid synthesis by the addition to an acyl acceptor of two carbons from malonyl-ACP. Catalyzes the first condensation reaction which initiates fatty acid synthesis and may therefore play a role in governing the total rate of fatty acid production. Possesses both acetoacetyl-ACP synthase and acetyl transacylase activities. Its substrate specificity determines the biosynthesis of branched-chain and/or straight-chain of fatty acids. This chain is Beta-ketoacyl-[acyl-carrier-protein] synthase III, found in Rhodospirillum centenum (strain ATCC 51521 / SW).